The primary structure comprises 475 residues: Probable dolichyl pyrophosphate Man9GlcNAc2 alpha-1,3-glucosyltransferase (475 aa).

8 consecutive transmembrane segments (helical) span residues 114–133 (VVSADVLIYLPAMLLLAYSL), 161–181 (GHFQYNNISLGFAAVAIAAIL), 235–255 (AVVLGTFAILWVPWLGSLQAV), 296–316 (MALVCIACTLIASLPTNVLLF), 322–342 (VGFLLALFNTSLAFFLFSFQV), 385–405 (LLVPAVVATVAFHLIFKCFDS), 418–438 (IANISQILMISVVVASLTVPA), and 441–461 (KYPDLWPLIISVTSCGHFFLF).

Belongs to the ALG6/ALG8 glucosyltransferase family.

The protein resides in the endoplasmic reticulum membrane. The enzyme catalyses an alpha-D-Man-(1-&gt;2)-alpha-D-Man-(1-&gt;2)-alpha-D-Man-(1-&gt;3)-[alpha-D-Man-(1-&gt;2)-alpha-D-Man-(1-&gt;3)-[alpha-D-Man-(1-&gt;2)-alpha-D-Man-(1-&gt;6)]-alpha-D-Man-(1-&gt;6)]-beta-D-Man-(1-&gt;4)-beta-D-GlcNAc-(1-&gt;4)-alpha-D-GlcNAc-diphospho-di-trans,poly-cis-dolichol + a di-trans,poly-cis-dolichyl beta-D-glucosyl phosphate = an alpha-D-Glc-(1-&gt;3)-alpha-D-Man-(1-&gt;2)-alpha-D-Man-(1-&gt;2)-alpha-D-Man-(1-&gt;3)-[alpha-D-Man-(1-&gt;2)-alpha-D-Man-(1-&gt;3)-[alpha-D-Man-(1-&gt;2)-alpha-D-Man-(1-&gt;6)]-alpha-D-Man-(1-&gt;6)]-beta-D-Man-(1-&gt;4)-beta-D-GlcNAc-(1-&gt;4)-alpha-D-GlcNAc-diphospho-di-trans,poly-cis-dolichol + a di-trans,poly-cis-dolichyl phosphate + H(+). It functions in the pathway protein modification; protein glycosylation. Its function is as follows. Adds the first glucose residue to the lipid-linked oligosaccharide precursor for N-linked glycosylation. Transfers glucose from dolichyl phosphate glucose (Dol-P-Glc) onto the lipid-linked oligosaccharide Man(9)GlcNAc(2)-PP-Dol. Involved in cuticle differentiation. The chain is Probable dolichyl pyrophosphate Man9GlcNAc2 alpha-1,3-glucosyltransferase (gny) from Drosophila melanogaster (Fruit fly).